Here is a 505-residue protein sequence, read N- to C-terminus: Mannosylglucosyl-3-phosphoglycerate synthase (505 aa).

Monomer in solution.

The enzyme catalyses (2R)-2-O-(alpha-D-glucopyranosyl)-3-phospho-glycerate + GDP-alpha-D-mannose = (2R)-2-O-[alpha-D-mannopyranosyl-(1-&gt;2)-alpha-D-glucopyranosyl]-3-phospho-glycerate + GDP + H(+). Its activity is regulated as follows. Not strictly dependent on divalent cations, but the presence of Mn(2+), Ca(2+), Mg(2+) or Co(2+) stimulates activity. Functionally, involved in the biosynthesis of the compatible solute mannosylglucosylglycerate through a phosphorylating pathway. Catalyzes the conversion of glucosyl-3-phosphoglycerate (GPG) to mannosylglucosyl-3-phosphoglycerate (MGPG). This Petrotoga mobilis (strain DSM 10674 / SJ95) protein is Mannosylglucosyl-3-phosphoglycerate synthase.